The following is a 475-amino-acid chain: Histidine--tRNA ligase (475 aa).

This sequence belongs to the class-II aminoacyl-tRNA synthetase family. As to quaternary structure, homodimer.

It localises to the cytoplasm. It catalyses the reaction tRNA(His) + L-histidine + ATP = L-histidyl-tRNA(His) + AMP + diphosphate + H(+). The polypeptide is Histidine--tRNA ligase (Flavobacterium johnsoniae (strain ATCC 17061 / DSM 2064 / JCM 8514 / BCRC 14874 / CCUG 350202 / NBRC 14942 / NCIMB 11054 / UW101) (Cytophaga johnsonae)).